The sequence spans 443 residues: Tol-Pal system protein TolB (443 aa).

The signal sequence occupies residues 1–33 (MKIGIINTKIRTVFSAFACMIAASLVCTMPARA).

It belongs to the TolB family. The Tol-Pal system is composed of five core proteins: the inner membrane proteins TolA, TolQ and TolR, the periplasmic protein TolB and the outer membrane protein Pal. They form a network linking the inner and outer membranes and the peptidoglycan layer.

It localises to the periplasm. Its function is as follows. Part of the Tol-Pal system, which plays a role in outer membrane invagination during cell division and is important for maintaining outer membrane integrity. This is Tol-Pal system protein TolB from Brucella abortus (strain S19).